A 465-amino-acid polypeptide reads, in one-letter code: Putative F-box/FBD/LRR-repeat protein At1g22000 (465 aa).

The F-box domain occupies 28–74 (ETRICALPDDLLLQILPHVPTKEAVATSILSKQWRYVWLMLPKLEFK). LRR repeat units follow at residues 154–181 (CLTL…SLHY), 182–207 (VVYK…SVHS), 210–230 (DDNL…NYDE), 248–273 (NEVE…HLSE), and 339–365 (ISLV…TIDN). The 52-residue stretch at 373 to 424 (SWNQPSSIPGCLLSHLETFRWRGYGGREDAKKLLMTYILANSKCLKTVEISL) folds into the FBD domain.

This is Putative F-box/FBD/LRR-repeat protein At1g22000 from Arabidopsis thaliana (Mouse-ear cress).